Here is a 213-residue protein sequence, read N- to C-terminus: uncharacterized protein (213 aa).

This is an uncharacterized protein from Acidianus two-tailed virus (ATV).